The following is a 275-amino-acid chain: MQAVQREIAEQLNVQPPFADDQALEAEVARRISFIQDCLTSSGLKTLVLGISGGVDSLTAGLLAQRAMRELRERTGDEAYKFIAVRLPYDVQFDEHDAQASVDFIAPDERHTVNIGPAVKSLASEVAAFEGKHAVSVDFVLGNTKARMRMVAQYTIAGATHGLVIGTDHAAEAVMGFFTKFGDGACDLAPLSGLVKNQVRAIARSFGAPESLVEKVPTADLEDLSPGKPDEASHGVTYAEIDAFLHGEPVRQEAFDIIVNTYKKTHHKRVMPFAP.

G50–S57 is a binding site for ATP. Position 56 (D56) interacts with Mg(2+). R147 is a binding site for deamido-NAD(+). T167 is an ATP binding site. E172 contacts Mg(2+). Residues K180 and D187 each contribute to the deamido-NAD(+) site. Residues K196 and T218 each coordinate ATP. H267 to K268 serves as a coordination point for deamido-NAD(+).

The protein belongs to the NAD synthetase family. In terms of assembly, homodimer.

The catalysed reaction is deamido-NAD(+) + NH4(+) + ATP = AMP + diphosphate + NAD(+) + H(+). Its pathway is cofactor biosynthesis; NAD(+) biosynthesis; NAD(+) from deamido-NAD(+) (ammonia route): step 1/1. Functionally, catalyzes the ATP-dependent amidation of deamido-NAD to form NAD. Uses ammonia as a nitrogen source. The protein is NH(3)-dependent NAD(+) synthetase of Pseudomonas fluorescens (strain Pf0-1).